We begin with the raw amino-acid sequence, 370 residues long: 4-hydroxy-3-methylbut-2-en-1-yl diphosphate synthase (flavodoxin) (370 aa).

The [4Fe-4S] cluster site is built by cysteine 268, cysteine 271, cysteine 303, and glutamate 310.

It belongs to the IspG family. The cofactor is [4Fe-4S] cluster.

It catalyses the reaction (2E)-4-hydroxy-3-methylbut-2-enyl diphosphate + oxidized [flavodoxin] + H2O + 2 H(+) = 2-C-methyl-D-erythritol 2,4-cyclic diphosphate + reduced [flavodoxin]. It functions in the pathway isoprenoid biosynthesis; isopentenyl diphosphate biosynthesis via DXP pathway; isopentenyl diphosphate from 1-deoxy-D-xylulose 5-phosphate: step 5/6. In terms of biological role, converts 2C-methyl-D-erythritol 2,4-cyclodiphosphate (ME-2,4cPP) into 1-hydroxy-2-methyl-2-(E)-butenyl 4-diphosphate. The chain is 4-hydroxy-3-methylbut-2-en-1-yl diphosphate synthase (flavodoxin) from Bacillus pumilus (strain SAFR-032).